A 530-amino-acid polypeptide reads, in one-letter code: Na(+)/H(+) antiporter NhaB (530 aa).

13 helical membrane passes run 13-33 (FLGK…IINP), 34-54 (FVFF…EFIF), 64-84 (PLQP…TSPA), 90-110 (LVAN…IYFM), 113-133 (LLLY…LLSL), 136-156 (CLMA…AVVI), 205-225 (LLMH…VGEP), 234-254 (AGWL…PVFM), 306-326 (ALIA…VGLI), 351-371 (EEAL…AVII), 378-400 (PIIS…IANG), 450-470 (ATPN…APLI), and 481-501 (ALPY…FMLL).

The protein belongs to the NhaB Na(+)/H(+) (TC 2.A.34) antiporter family.

It localises to the cell inner membrane. It carries out the reaction 2 Na(+)(in) + 3 H(+)(out) = 2 Na(+)(out) + 3 H(+)(in). Functionally, na(+)/H(+) antiporter that extrudes sodium in exchange for external protons. The sequence is that of Na(+)/H(+) antiporter NhaB from Photobacterium profundum (strain SS9).